A 131-amino-acid chain; its full sequence is Glycine cleavage system H protein (131 aa).

The Lipoyl-binding domain occupies 24 to 106 (RVTVGISDHA…YGEGWIFVVE (83 aa)). Lys-65 bears the N6-lipoyllysine mark.

The protein belongs to the GcvH family. The glycine cleavage system is composed of four proteins: P, T, L and H. Requires (R)-lipoate as cofactor.

Functionally, the glycine cleavage system catalyzes the degradation of glycine. The H protein shuttles the methylamine group of glycine from the P protein to the T protein. The chain is Glycine cleavage system H protein from Xanthomonas oryzae pv. oryzae (strain MAFF 311018).